We begin with the raw amino-acid sequence, 148 residues long: Deoxyuridine 5'-triphosphate nucleotidohydrolase (148 aa).

Substrate is bound by residues 68–70 (RSG), asparagine 81, 85–87 (TID), and lysine 95.

It belongs to the dUTPase family. The cofactor is Mg(2+).

The enzyme catalyses dUTP + H2O = dUMP + diphosphate + H(+). It participates in pyrimidine metabolism; dUMP biosynthesis; dUMP from dCTP (dUTP route): step 2/2. This enzyme is involved in nucleotide metabolism: it produces dUMP, the immediate precursor of thymidine nucleotides and it decreases the intracellular concentration of dUTP so that uracil cannot be incorporated into DNA. This chain is Deoxyuridine 5'-triphosphate nucleotidohydrolase, found in Rickettsia peacockii (strain Rustic).